Reading from the N-terminus, the 217-residue chain is Large ribosomal subunit protein uL1 (217 aa).

Belongs to the universal ribosomal protein uL1 family. In terms of assembly, component of the large ribosomal subunit (LSU). Mature N.crassa ribosomes consist of a small (40S) and a large (60S) subunit. The 40S small subunit contains 1 molecule of ribosomal RNA (18S rRNA) and at least 32 different proteins. The large 60S subunit contains 3 rRNA molecules (26S, 5.8S and 5S rRNA) and at least 42 different proteins. uL1 forms part of the L1 stalk.

Its subcellular location is the cytoplasm. Its function is as follows. Component of the ribosome, a large ribonucleoprotein complex responsible for the synthesis of proteins in the cell. The small ribosomal subunit (SSU) binds messenger RNAs (mRNAs) and translates the encoded message by selecting cognate aminoacyl-transfer RNA (tRNA) molecules. The large subunit (LSU) contains the ribosomal catalytic site termed the peptidyl transferase center (PTC), which catalyzes the formation of peptide bonds, thereby polymerizing the amino acids delivered by tRNAs into a polypeptide chain. The nascent polypeptides leave the ribosome through a tunnel in the LSU and interact with protein factors that function in enzymatic processing, targeting, and the membrane insertion of nascent chains at the exit of the ribosomal tunnel. uL1 forms part of the L1 stalk, a mobile element that plays a role in evacuating the exit-site tRNA. This Neurospora crassa (strain ATCC 24698 / 74-OR23-1A / CBS 708.71 / DSM 1257 / FGSC 987) protein is Large ribosomal subunit protein uL1 (crp-74).